The chain runs to 208 residues: Small ribosomal subunit protein uS4 (208 aa).

In terms of domain architecture, S4 RNA-binding spans 98-158 (GRLDNVVYRM…EKSKKQARIK (61 aa)).

The protein belongs to the universal ribosomal protein uS4 family. As to quaternary structure, part of the 30S ribosomal subunit. Contacts protein S5. The interaction surface between S4 and S5 is involved in control of translational fidelity.

Functionally, one of the primary rRNA binding proteins, it binds directly to 16S rRNA where it nucleates assembly of the body of the 30S subunit. In terms of biological role, with S5 and S12 plays an important role in translational accuracy. The sequence is that of Small ribosomal subunit protein uS4 from Haemophilus ducreyi (strain 35000HP / ATCC 700724).